Consider the following 423-residue polypeptide: Large ribosomal subunit protein mL37 (423 aa).

The transit peptide at 1–29 (MALASGPARRALAGSGQLGLGGFGAPRRG) directs the protein to the mitochondrion.

This sequence belongs to the mitochondrion-specific ribosomal protein mL37 family. As to quaternary structure, component of the mitochondrial large ribosomal subunit (mt-LSU). Mature mammalian 55S mitochondrial ribosomes consist of a small (28S) and a large (39S) subunit. The 28S small subunit contains a 12S ribosomal RNA (12S mt-rRNA) and 30 different proteins. The 39S large subunit contains a 16S rRNA (16S mt-rRNA), a copy of mitochondrial valine transfer RNA (mt-tRNA(Val)), which plays an integral structural role, and 52 different proteins. mL37 forms a heterodimer with mL65.

Its subcellular location is the mitochondrion. In Homo sapiens (Human), this protein is Large ribosomal subunit protein mL37 (MRPL37).